Reading from the N-terminus, the 1011-residue chain is Retinoblastoma-related protein (1011 aa).

The disordered stretch occupies residues 1–22 (MSQASVDMEDVKPSISLPSDDG). The segment at 411–612 (TPVSTAMTTA…ERGSSMYNSL (202 aa)) is domain A. The segment at 411–860 (TPVSTAMTTA…NEVFIPSVKP (450 aa)) is pocket. A spacer region spans residues 613–729 (IVARPTLAAE…PAGGGETCAE (117 aa)). The domain B stretch occupies residues 730-860 (TGINIFFNKI…NEVFIPSVKP (131 aa)). A disordered region spans residues 872-903 (QKSKSSPEDSNNADSQIPGSPRLSPFPNLPDM). Polar residues predominate over residues 873–889 (KSKSSPEDSNNADSQIP).

It belongs to the retinoblastoma protein (RB) family.

The protein localises to the nucleus. Its function is as follows. Regulator of biological processes that recruits a histone deacetylase to control gene transcription. May play a role in the entry into mitosis, negatively regulating the cell proliferation. Formation of stable complexes with geminiviridae replication-associated proteins may create a cellular environment which favors viral DNA replication. The sequence is that of Retinoblastoma-related protein (Rb1) from Cocos nucifera (Coconut palm).